Here is a 573-residue protein sequence, read N- to C-terminus: Urease subunit alpha (573 aa).

Positions 136 to 573 (GAIDCHVHFI…LPMAQRYFLF (438 aa)) constitute a Urease domain. The Ni(2+) site is built by His-141, His-143, and Lys-224. An N6-carboxylysine modification is found at Lys-224. Residue His-226 participates in substrate binding. 2 residues coordinate Ni(2+): His-253 and His-279. His-327 (proton donor) is an active-site residue. Asp-367 is a binding site for Ni(2+).

It belongs to the metallo-dependent hydrolases superfamily. Urease alpha subunit family. As to quaternary structure, heterotrimer of UreA (gamma), UreB (beta) and UreC (alpha) subunits. Three heterotrimers associate to form the active enzyme. It depends on Ni cation as a cofactor. Carboxylation allows a single lysine to coordinate two nickel ions.

It is found in the cytoplasm. It carries out the reaction urea + 2 H2O + H(+) = hydrogencarbonate + 2 NH4(+). Its pathway is nitrogen metabolism; urea degradation; CO(2) and NH(3) from urea (urease route): step 1/1. The chain is Urease subunit alpha from Nocardia farcinica (strain IFM 10152).